The primary structure comprises 244 residues: Centromere protein H (244 aa).

An N-acetylmethionine modification is found at Met-1. The disordered stretch occupies residues 1-33 (METQSEEQAVTKPADSGGEGGPPQVAGAQAARP). A Phosphoserine modification is found at Ser-16. Residues 22–31 (PPQVAGAQAA) show a composition bias toward low complexity. Lys-64 participates in a covalent cross-link: Glycyl lysine isopeptide (Lys-Gly) (interchain with G-Cter in SUMO2). Thr-65 carries the post-translational modification Phosphothreonine. Coiled coils occupy residues 66–104 (PEQI…DRMQ) and 146–189 (DLEE…MENS).

It belongs to the CENP-H/MCM16 family. Self-associates. Component of the CENPA-NAC complex, at least composed of CENPA, CENPC, CENPH, CENPM, CENPN, CENPT and CENPU. The CENPA-NAC complex interacts with the CENPA-CAD complex, composed of CENPI, CENPK, CENPL, CENPO, CENPP, CENPQ, CENPR and CENPS. Interacts with KIF2C and NDC80.

The protein resides in the nucleus. It is found in the chromosome. It localises to the centromere. The protein localises to the kinetochore. Component of the CENPA-NAC (nucleosome-associated) complex, a complex that plays a central role in assembly of kinetochore proteins, mitotic progression and chromosome segregation. The CENPA-NAC complex recruits the CENPA-CAD (nucleosome distal) complex and may be involved in incorporation of newly synthesized CENPA into centromeres. The sequence is that of Centromere protein H (CENPH) from Bos taurus (Bovine).